Reading from the N-terminus, the 192-residue chain is Fe/S biogenesis protein NfuA (192 aa).

[4Fe-4S] cluster is bound by residues Cys149 and Cys152.

Belongs to the NfuA family. In terms of assembly, homodimer. The cofactor is [4Fe-4S] cluster.

Functionally, involved in iron-sulfur cluster biogenesis. Binds a 4Fe-4S cluster, can transfer this cluster to apoproteins, and thereby intervenes in the maturation of Fe/S proteins. Could also act as a scaffold/chaperone for damaged Fe/S proteins. This chain is Fe/S biogenesis protein NfuA, found in Shewanella halifaxensis (strain HAW-EB4).